The chain runs to 434 residues: D-inositol 3-phosphate glycosyltransferase (434 aa).

A 1D-myo-inositol 3-phosphate-binding site is contributed by His-26. UDP-N-acetyl-alpha-D-glucosamine is bound by residues 32-33 (QP) and Gly-40. 1D-myo-inositol 3-phosphate is bound by residues 37 to 42 (DAGGMN), Lys-95, Tyr-128, Thr-152, and Arg-172. Arg-246 and Lys-251 together coordinate UDP-N-acetyl-alpha-D-glucosamine. Positions 321, 322, and 324 each coordinate Mg(2+). Glu-334 and Glu-342 together coordinate UDP-N-acetyl-alpha-D-glucosamine. Thr-348 lines the Mg(2+) pocket.

This sequence belongs to the glycosyltransferase group 1 family. MshA subfamily. Homodimer.

It carries out the reaction 1D-myo-inositol 3-phosphate + UDP-N-acetyl-alpha-D-glucosamine = 1D-myo-inositol 2-acetamido-2-deoxy-alpha-D-glucopyranoside 3-phosphate + UDP + H(+). Functionally, catalyzes the transfer of a N-acetyl-glucosamine moiety to 1D-myo-inositol 3-phosphate to produce 1D-myo-inositol 2-acetamido-2-deoxy-glucopyranoside 3-phosphate in the mycothiol biosynthesis pathway. In Thermobifida fusca (strain YX), this protein is D-inositol 3-phosphate glycosyltransferase.